The chain runs to 209 residues: Small ribosomal subunit protein uS4 (209 aa).

Residues cysteine 9, cysteine 12, cysteine 26, and cysteine 31 each contribute to the Zn(2+) site. The C4-type zinc finger occupies 9–31 (CRLCRREGVKLYLKGERCYSPKC). The region spanning 100 to 162 (RLDNVVYRLG…RNLELIRQNL (63 aa)) is the S4 RNA-binding domain.

It belongs to the universal ribosomal protein uS4 family. As to quaternary structure, part of the 30S ribosomal subunit. Contacts protein S5. The interaction surface between S4 and S5 is involved in control of translational fidelity. Zn(2+) serves as cofactor.

In terms of biological role, one of the primary rRNA binding proteins, it binds directly to 16S rRNA where it helps nucleate assembly of the body and platform of the 30S subunit. This Thermus thermophilus (strain ATCC BAA-163 / DSM 7039 / HB27) protein is Small ribosomal subunit protein uS4 (rpsD).